The primary structure comprises 534 residues: GMP synthase [glutamine-hydrolyzing] (534 aa).

Residues 20 to 210 (PVLVIDFGAQ…LLVGAGCRPS (191 aa)) form the Glutamine amidotransferase type-1 domain. Cys-97 acts as the Nucleophile in catalysis. Catalysis depends on residues His-184 and Glu-186. One can recognise a GMPS ATP-PPase domain in the interval 211 to 408 (WTMINIVEEA…LGLPEDIVWR (198 aa)). 238–244 (SGGVDSA) serves as a coordination point for ATP.

As to quaternary structure, homodimer.

The enzyme catalyses XMP + L-glutamine + ATP + H2O = GMP + L-glutamate + AMP + diphosphate + 2 H(+). It functions in the pathway purine metabolism; GMP biosynthesis; GMP from XMP (L-Gln route): step 1/1. Functionally, catalyzes the synthesis of GMP from XMP. This Parafrankia sp. (strain EAN1pec) protein is GMP synthase [glutamine-hydrolyzing].